We begin with the raw amino-acid sequence, 150 residues long: uncharacterized protein (150 aa).

The Rhodanese domain occupies 19 to 93 (GAQDYVLVDV…SSKRLALRES (75 aa)).

This is an uncharacterized protein from Synechococcus elongatus.